The sequence spans 337 residues: AP2/ERF and B3 domain-containing transcription factor At1g50680 (337 aa).

Positions lysine 27–proline 84 form a DNA-binding region, AP2/ERF. The TF-B3 DNA-binding region spans phenylalanine 157–asparagine 271.

It belongs to the AP2/ERF transcription factor family. RAV subfamily.

The protein localises to the nucleus. In terms of biological role, probably acts as a transcriptional activator. Binds to the GCC-box pathogenesis-related promoter element. May be involved in the regulation of gene expression by stress factors and by components of stress signal transduction pathways. The protein is AP2/ERF and B3 domain-containing transcription factor At1g50680 of Arabidopsis thaliana (Mouse-ear cress).